Consider the following 781-residue polypeptide: DNA translocase FtsK 2 (781 aa).

4 consecutive transmembrane segments (helical) span residues 24-44 (LLGEVRWFLLLAVTIAFLTIL), 74-94 (FADVLLFVFGASAYWWALLLL), 120-140 (AGVTWFGFALILSASMGLEAI), and 170-190 (GFTGGTLLLLLMFTVGLSLFF). Topologically, residues 191–781 (HFSWLNLAEQ…NRNGNVVEEE (591 aa)) are cytoplasmic. Residues 414–623 (GKPVVADLAK…FQVSSKIDSR (210 aa)) enclose the FtsK domain. 434 to 439 (GSGKSV) contributes to the ATP binding site.

This sequence belongs to the FtsK/SpoIIIE/SftA family. Homohexamer. Forms a ring that surrounds DNA.

The protein resides in the cell inner membrane. Essential cell division protein that coordinates cell division and chromosome segregation. The N-terminus is involved in assembly of the cell-division machinery. The C-terminus functions as a DNA motor that moves dsDNA in an ATP-dependent manner towards the dif recombination site, which is located within the replication terminus region. Translocation stops specifically at Xer-dif sites, where FtsK interacts with the Xer recombinase, allowing activation of chromosome unlinking by recombination. FtsK orienting polar sequences (KOPS) guide the direction of DNA translocation. FtsK can remove proteins from DNA as it translocates, but translocation stops specifically at XerCD-dif site, thereby preventing removal of XerC and XerD from dif. The sequence is that of DNA translocase FtsK 2 (ftsK2) from Ralstonia nicotianae (strain ATCC BAA-1114 / GMI1000) (Ralstonia solanacearum).